The sequence spans 162 residues: Cyanate hydratase (162 aa).

Catalysis depends on residues Arg-103, Glu-106, and Ser-129.

Belongs to the cyanase family.

It catalyses the reaction cyanate + hydrogencarbonate + 3 H(+) = NH4(+) + 2 CO2. Catalyzes the reaction of cyanate with bicarbonate to produce ammonia and carbon dioxide. This is Cyanate hydratase from Pyrenophora tritici-repentis (strain Pt-1C-BFP) (Wheat tan spot fungus).